Consider the following 119-residue polypeptide: Flagellar transcriptional regulator FlhD (119 aa).

It belongs to the FlhD family. Homodimer; disulfide-linked. Forms a heterohexamer composed of two FlhC and four FlhD subunits. Each FlhC binds a FlhD dimer, forming a heterotrimer, and a hexamer assembles by dimerization of two heterotrimers.

The protein resides in the cytoplasm. In terms of biological role, functions in complex with FlhC as a master transcriptional regulator that regulates transcription of several flagellar and non-flagellar operons by binding to their promoter region. Activates expression of class 2 flagellar genes, including fliA, which is a flagellum-specific sigma factor that turns on the class 3 genes. Also regulates genes whose products function in a variety of physiological pathways. The polypeptide is Flagellar transcriptional regulator FlhD (Serratia marcescens).